Here is a 102-residue protein sequence, read N- to C-terminus: MVIGLSHYLTVSAILFTIGVFGIFLNRKNVIVILMSIELILLAVNINMVAFSAFLNDIVGQVFALFILTVAAAEAAIGLAILVVFYRNRGSIAVEDVNMMKG.

Helical transmembrane passes span 5–25, 31–51, and 65–85; these read LSHY…GIFL, IVIL…MVAF, and LFIL…LVVF.

This sequence belongs to the complex I subunit 4L family. As to quaternary structure, NDH-1 is composed of 14 different subunits. Subunits NuoA, H, J, K, L, M, N constitute the membrane sector of the complex.

It localises to the cell inner membrane. It catalyses the reaction a quinone + NADH + 5 H(+)(in) = a quinol + NAD(+) + 4 H(+)(out). NDH-1 shuttles electrons from NADH, via FMN and iron-sulfur (Fe-S) centers, to quinones in the respiratory chain. The immediate electron acceptor for the enzyme in this species is believed to be ubiquinone. Couples the redox reaction to proton translocation (for every two electrons transferred, four hydrogen ions are translocated across the cytoplasmic membrane), and thus conserves the redox energy in a proton gradient. The chain is NADH-quinone oxidoreductase subunit K from Agrobacterium fabrum (strain C58 / ATCC 33970) (Agrobacterium tumefaciens (strain C58)).